We begin with the raw amino-acid sequence, 551 residues long: Eukaryotic translation initiation factor 3 subunit D-2 (551 aa).

Residues 108–152 form a disordered region; that stretch reads RARGRTGRGNATLGGLGGPVAGGSTANSTKYGKGRNTRNAQNMGR. A compositionally biased stretch (gly residues) spans 119–128; that stretch reads TLGGLGGPVA. The tract at residues 290-304 is RNA gate; that stretch reads QFDLLTVNETSLEPP. Residues 530-551 form a disordered region; it reads AFDSDGDDESESSEPFGNSIDN. The segment covering 531–541 has biased composition (acidic residues); that stretch reads FDSDGDDESES.

It belongs to the eIF-3 subunit D family. In terms of assembly, component of the eukaryotic translation initiation factor 3 (eIF-3) complex. The eIF-3 complex interacts with pix.

The protein resides in the cytoplasm. Functionally, mRNA cap-binding component of the eukaryotic translation initiation factor 3 (eIF-3) complex, which is involved in protein synthesis of a specialized repertoire of mRNAs and, together with other initiation factors, stimulates binding of mRNA and methionyl-tRNAi to the 40S ribosome. The eIF-3 complex specifically targets and initiates translation of a subset of mRNAs involved in cell proliferation. In the eIF-3 complex, eif3d specifically recognizes and binds the 7-methylguanosine cap of a subset of mRNAs. In Drosophila yakuba (Fruit fly), this protein is Eukaryotic translation initiation factor 3 subunit D-2.